The sequence spans 1032 residues: Baseplate wedge protein gp7 (1032 aa).

The segment at 1012 to 1032 is disordered; the sequence is LKDNIGNPRDPENPTQVKIDE.

This sequence belongs to the T4likevirus baseplate wedge protein gp7 family. Heterotrimer with gp6; assembles as a (gp6)2-gp7 heterotrimeric molecule. The (gp6)2-gp7 heterotrimeric molecule further interacts with gp25 and gp53. The gp25-(gp6)2-gp7 module is involved in sheath contraction. Interacts with gp8. Binds to gp10 homotrimer; disulfide-linked. Heteromultimer with gp10; a gp10 molecule is disulfide-linked to gp7 and the other two remaining gp10 molecules form a disulfide bond. Part of the baseplate macromolecular complex which consists of gp5, gp5.4, gp27 (central spike complex); gp6, gp25, gp53 (inner baseplate); gp7, gp8 (intermediate baseplate); gp9, gp10, gp11, gp12 (peripheral); gp48 and gp54 (proximal region of the tail tube).

It is found in the virion. Functionally, intermediate/inner baseplate protein. The gp25-(gp6)2-gp7 module is involved in sheath contraction. Involved in the tail assembly. This chain is Baseplate wedge protein gp7 (7), found in Enterobacteria phage T4 (Bacteriophage T4).